A 447-amino-acid polypeptide reads, in one-letter code: MQKEKDVAIVGSGLVGSLLAIFLRKQGHKVTVFDRRPDVRNVQFSGRSINLAMSNRGWKALREAGIEDEIRELALPLDKRAMHVEGQSVYFQKYGEEGEAIYSISRGILNRKMIDLAESAGATFRFEEKIWDVDMKEARLYTGESEKSVWKEYQFDLIFGADGAFSRVRHKMQRQSRFNYSQHFIDVGYKELTILANEDGSHKMDNSSFHIWPRGNFMLIAMPNLDGTFTCTLFMPFDGETSFESIKTEDEADIFFEKYFPDIKDEISNLKKDFFKNPTSAMVTIKCFPWSYFDKITLVGDSAHAIVPFYGQGMNAGFEDISVLNEKMNLYGDDWEKVFEDYQTERKPNADAIAELSYRNFVEMSKKTADPKFLLRKKIEQKFAENHPDLWTPLYSRVTFSDKAYSDALKIGDYQREIMDEVMKIPGIEEKWESSEVEEKIISLIKK.

It belongs to the aromatic-ring hydroxylase family. KMO subfamily. FAD serves as cofactor.

The catalysed reaction is L-kynurenine + NADPH + O2 + H(+) = 3-hydroxy-L-kynurenine + NADP(+) + H2O. It participates in cofactor biosynthesis; NAD(+) biosynthesis; quinolinate from L-kynurenine: step 1/3. Catalyzes the hydroxylation of L-kynurenine (L-Kyn) to form 3-hydroxy-L-kynurenine (L-3OHKyn). Required for synthesis of quinolinic acid. In Christiangramia forsetii (strain DSM 17595 / CGMCC 1.15422 / KT0803) (Gramella forsetii), this protein is Kynurenine 3-monooxygenase.